The chain runs to 804 residues: MKFTLSWLKDHLETDASLDEICDKLTAIGLEVGHVDDRSSLKGFVIAKVLKAMKHPDADKLQILLVDTGSGTPVQVICGAPNARVGLVGVLALPGTYVPGLDVTLSVGKIRGVESFGMMCSQAELELSNEHDGIIELPEDAPIGGLFATYAGLDDPVIDLSLTPNRSDCTGVHGIARDLAAAGIGRLRKLSLPKFVSSFETPLRVFLDFSQDASLCLGFAWREVRNIQNGVSPQWMQQRLSAIGLRPMNALVDMSNYISFDVGRPLHVFDADKIKGDLRVRRGREGEQLQALNGKIYNLSVKDCVIADEEGVVSIAGIMGGERTSCDEMTRRVIIESALWDARSIAQTGRALGLVSDARYRFERGVDPAFMETGLEVATELVLRLCGGEGSKTKIVGYQQPEIKQIAFPFSEIKRLTHLEIEREQVITILTNLGFGIEGEGNVVTVKVPTWRPDIAGKADLVEEVMRIYGLDKIEPIPLEGFAEAKGQVLTCTQIRSRVTRLALVDRGMREAVTWSFISESQAIAFGGGQAQLKLVNPIAADMSVMRPSLLPGLLIAAQRNADRGFPDLALFEVSNIYEDDTPEKQQSVAGGIRRGTERFEGAGRFWDGHTRTVDVFEAKADALAVLEACGLDIDKVQIEVGAPDWYHPGRSGVMKLGSKIIVGFFGVLHPAILERLDVSGPLCGFEIFLDRIPESKKKATKSRSPLKLSPFQMVRRDFAFVVDKVITSSLIVRAASGADKKLIHSVRVFDVFEDLSLGEDKKSVAIEVAIQPIERTLTDGDIEALASKVVENVTKATGAYLRR.

A tRNA-binding domain is found at 38–148; that stretch reads RSSLKGFVIA…EDAPIGGLFA (111 aa). A B5 domain is found at 401–476; the sequence is PEIKQIAFPF…RIYGLDKIEP (76 aa). Residues Asp-454, Asp-460, Glu-463, and Glu-464 each coordinate Mg(2+). Positions 710–803 constitute an FDX-ACB domain; it reads SPFQMVRRDF…VTKATGAYLR (94 aa).

It belongs to the phenylalanyl-tRNA synthetase beta subunit family. Type 1 subfamily. As to quaternary structure, tetramer of two alpha and two beta subunits. The cofactor is Mg(2+).

Its subcellular location is the cytoplasm. The catalysed reaction is tRNA(Phe) + L-phenylalanine + ATP = L-phenylalanyl-tRNA(Phe) + AMP + diphosphate + H(+). In Bartonella quintana (strain Toulouse) (Rochalimaea quintana), this protein is Phenylalanine--tRNA ligase beta subunit.